Here is a 412-residue protein sequence, read N- to C-terminus: Argininosuccinate synthase (412 aa).

10–18 (AYSGGLDTS) is a binding site for ATP. Tyrosine 89 provides a ligand contact to L-citrulline. Glycine 119 lines the ATP pocket. Residues threonine 121, asparagine 125, and aspartate 126 each contribute to the L-aspartate site. Position 125 (asparagine 125) interacts with L-citrulline. Residues arginine 129, serine 177, glutamate 261, and tyrosine 273 each coordinate L-citrulline.

The protein belongs to the argininosuccinate synthase family. Type 1 subfamily. As to quaternary structure, homotetramer.

The protein resides in the cytoplasm. The enzyme catalyses L-citrulline + L-aspartate + ATP = 2-(N(omega)-L-arginino)succinate + AMP + diphosphate + H(+). It participates in amino-acid biosynthesis; L-arginine biosynthesis; L-arginine from L-ornithine and carbamoyl phosphate: step 2/3. The chain is Argininosuccinate synthase from Bifidobacterium longum (strain DJO10A).